The sequence spans 41 residues: Large ribosomal subunit protein bL36 (41 aa).

This sequence belongs to the bacterial ribosomal protein bL36 family.

The polypeptide is Large ribosomal subunit protein bL36 (Rickettsia massiliae (strain Mtu5)).